The following is a 688-amino-acid chain: Elongation factor G (688 aa).

The region spanning 8-282 (EKFRNIGIMA…AVVDFMPSPL (275 aa)) is the tr-type G domain. GTP-binding positions include 17–24 (AHIDAGKT), 81–85 (DTPGH), and 135–138 (NKMD). Residues 282 to 305 (LDIPPIKGTDPETGEETDRPADDN) are disordered.

Belongs to the TRAFAC class translation factor GTPase superfamily. Classic translation factor GTPase family. EF-G/EF-2 subfamily.

The protein resides in the cytoplasm. Its function is as follows. Catalyzes the GTP-dependent ribosomal translocation step during translation elongation. During this step, the ribosome changes from the pre-translocational (PRE) to the post-translocational (POST) state as the newly formed A-site-bound peptidyl-tRNA and P-site-bound deacylated tRNA move to the P and E sites, respectively. Catalyzes the coordinated movement of the two tRNA molecules, the mRNA and conformational changes in the ribosome. This chain is Elongation factor G, found in Clostridium kluyveri (strain NBRC 12016).